The primary structure comprises 383 residues: Outer membrane protein assembly factor BamB (383 aa).

A signal peptide spans 1–23 (MMLLKRCNRRALVALAAVLLLAA). The N-palmitoyl cysteine moiety is linked to residue cysteine 24. A lipid anchor (S-diacylglycerol cysteine) is attached at cysteine 24.

It belongs to the BamB family. Part of the Bam complex.

Its subcellular location is the cell outer membrane. Part of the outer membrane protein assembly complex, which is involved in assembly and insertion of beta-barrel proteins into the outer membrane. In Alkalilimnicola ehrlichii (strain ATCC BAA-1101 / DSM 17681 / MLHE-1), this protein is Outer membrane protein assembly factor BamB.